Consider the following 203-residue polypeptide: Ribosomal RNA small subunit methyltransferase G (203 aa).

S-adenosyl-L-methionine-binding positions include Gly73, Leu78, Val124–Glu125, and Arg139.

Belongs to the methyltransferase superfamily. RNA methyltransferase RsmG family.

The protein localises to the cytoplasm. It carries out the reaction guanosine(527) in 16S rRNA + S-adenosyl-L-methionine = N(7)-methylguanosine(527) in 16S rRNA + S-adenosyl-L-homocysteine. Specifically methylates the N7 position of guanine in position 527 of 16S rRNA. The protein is Ribosomal RNA small subunit methyltransferase G of Haemophilus influenzae (strain PittEE).